We begin with the raw amino-acid sequence, 377 residues long: Apelin receptor (377 aa).

The Extracellular portion of the chain corresponds to 1-28 (MEDDGYNYYGADNQSECDYADWKPSGAL). Asparagine 13 is a glycosylation site (N-linked (GlcNAc...) asparagine). Cystine bridges form between cysteine 17–cysteine 279 and cysteine 100–cysteine 179. A helical transmembrane segment spans residues 29-52 (IPAIYMLVFLLGTTGNGLVLWTVF). The Cytoplasmic segment spans residues 53–62 (RTSREKRRSA). The chain crosses the membrane as a helical span at residues 63 to 84 (DIFIASLAVADLTFVVTLPLWA). Residues 85 to 97 (TYTYREFDWPFGT) are Extracellular-facing. Residues 98–123 (FSCKLSSYLIFVNMYASVFCLTGLSF) traverse the membrane as a helical segment. Over 124-144 (DRYLAIVRPVANARLRLRVSG) the chain is Cytoplasmic. Residues 145 to 162 (AVATAVLWVLAALLAVPV) form a helical membrane-spanning segment. Over 163-196 (MVFRSTDASENGTKIQCYMDYSMVATSNSEWAWE) the chain is Extracellular. Asparagine 173 is a glycosylation site (N-linked (GlcNAc...) asparagine). A helical transmembrane segment spans residues 197 to 221 (VGLGVSSTAVGFVVPFTIMLTCYFF). The Cytoplasmic segment spans residues 222 to 244 (IAQTIAGHFRKERIEGLRKRRRL). Residues 245–268 (LSIIVVLVVTFALCWMPYHLVKTL) traverse the membrane as a helical segment. At 269–287 (YMLGSLLHWPCDFDIFLMN) the chain is on the extracellular side. Residues 288–310 (VFPYCTCISYVNSCLNPFLYAFF) form a helical membrane-spanning segment. Residues 311–377 (DPRFRQACTS…IPYSQETLVD (67 aa)) lie on the Cytoplasmic side of the membrane. A disordered region spans residues 334–377 (HSSSAEKSASYSSGHSQGPGPNMGKGGEQMHEKSIPYSQETLVD). The span at 335-349 (SSSAEKSASYSSGHS) shows a compositional bias: low complexity.

Belongs to the G-protein coupled receptor 1 family. Homodimer; dimerization inhibits APLNR-mediated G protein and beta-arrestin signaling pathways compared to monomeric APLNR. As to expression, expressed in coronary endothelial cells (at protein level). Expressed in the embryo, allantoic and endothelial precursor cells of the yolk sac at 8 days post-coitum (dpc). Expressed in the secondary heart field and somite at 8.25 dpc. Expressed in fetal allantoic endothelial cells at 9 dpc. Expressed in the allantoid and the invading fetal vasculature of the placenta at 9.5 dpc. Expressed in endothelial cells adjacent to syncytiotrophoblast cells at 10.5 dpc. Expressed weakly in the embryonic heart at 11.5 dpc. Expressed in the adult heart. Expressed in endothelial cells and cardiomyocytes and weakly expressed in fibroblasts.

It is found in the cell membrane. In terms of biological role, g protein-coupled receptor for peptide hormones apelin (APLN) and apelin receptor early endogenous ligand (APELA), that plays a role in the regulation of normal cardiovascular function and fluid homeostasis. When acting as apelin receptor, activates both G(i) protein pathway that inhibits adenylate cyclase activity, and the beta-arrestin pathway leading to internalization of the receptor. APLNR/APJ receptor is also activated by mechanical strech in a G-protein-independent fashion to induce beta-arrestin signaling leading to cardiac hypertrophy. However, the presence of apelin ligand blunts cardiac hypertrophic induction from APLNR/APJ on response to pathological stimuli. Plays a key role in early development such as gastrulation, blood vessels formation and heart morphogenesis by acting as a receptor for APELA hormone. May promote angioblast migration toward the embryonic midline, i.e. the position of the future vessel formation, during vasculogenesis. Promotes sinus venosus (SV)-derived endothelial cells migration into the developing heart to promote coronary blood vessel development. Also plays a role in various processes in adults such as regulation of blood vessel formation, blood pressure and heart contractility and protection from cardiac hypertrophy and heart failure. The protein is Apelin receptor of Mus musculus (Mouse).